Consider the following 102-residue polypeptide: Neuropeptide F (102 aa).

The first 29 residues, 1 to 29 (MSNTMRCILIVCVALTLIAAGCNVEASNS), serve as a signal peptide directing secretion. Residues 30 to 32 (RPP) constitute a propeptide that is removed on maturation. A Phenylalanine amide modification is found at Phe62. A propeptide spanning residues 66-102 (GGPLMEMLRNRELENNMAKSINSGGELIRALDEEEVF) is cleaved from the precursor.

This sequence belongs to the NPY family.

It is found in the secreted. An integral part of the sensory system that mediates food signaling, providing the neural basis for the regulation of food response; coordinates larval foraging and social behavior changes during development. May have a hormonal role in females. This is Neuropeptide F from Drosophila pseudoobscura pseudoobscura (Fruit fly).